The chain runs to 291 residues: E3 ubiquitin-protein ligase MARCHF8 (291 aa).

The segment at Tyr-22–Ile-72 is disordered. Positions Lys-25–Leu-39 are enriched in basic and acidic residues. The span at Ser-50–Ile-72 shows a compositional bias: low complexity. The RING-CH-type zinc-finger motif lies at Ile-72–Glu-133. 8 residues coordinate Zn(2+): Cys-80, Cys-83, Cys-97, Cys-99, His-107, Cys-110, Cys-123, and Cys-126. Transmembrane regions (helical) follow at residues Cys-157 to Ile-177 and Phe-197 to Val-217. A Phosphoserine modification is found at Ser-253.

As to quaternary structure, interacts with CD86. As to expression, broadly expressed. Present in immature dendritic cells (at protein level).

It is found in the golgi apparatus membrane. It localises to the endoplasmic reticulum membrane. The protein localises to the cytoplasmic vesicle membrane. The protein resides in the lysosome membrane. Its subcellular location is the early endosome membrane. It carries out the reaction S-ubiquitinyl-[E2 ubiquitin-conjugating enzyme]-L-cysteine + [acceptor protein]-L-lysine = [E2 ubiquitin-conjugating enzyme]-L-cysteine + N(6)-ubiquitinyl-[acceptor protein]-L-lysine.. Its pathway is protein modification; protein ubiquitination. E3 ubiquitin-protein ligase that plays several important roles in innate immunity and adaptive immunity. Mediates ubiquitination of CD86 and MHC class II proteins, such as HLA-DR alpha and beta, and promotes their subsequent endocytosis and sorting to lysosomes via multivesicular bodies. Possesses a very broad antiviral activity by specifically inactivating different viral fusion proteins. Targets and ubiquitinates cytoplasmic lysine residues of viral envelope glycoproteins with single transmembrane domains leading to their lysosomal degradation. Therefore, shows broad-spectrum inhibition against many viruses including retroviruses, rhabdoviruses, arenaviruses, sarbecoviruses or influenzaviruses. Strongly blocks human immunodeficiency virus type 1 envelope glycoprotein incorporation into virions by down-regulating its cell surface expression. Also blocks ebola virus glycoprotein/GP incorporation via surface down-regulation. Mediates 'Lys-63'-linked polyubiquitination of influenza M2 to target it to lysosome for degradation. Mediates the regulation of constitutive ubiquitination and trafficking of the viral restriction factor BST2 within the endocytic pathway. Plays a role in maintenance of immune tolerance to self by promoting the turnover and proteasomal degradation of PD-L1/CD274 via ubiquitination. Catalyzes the 'Lys-63'-linked polyubiquitylation of cGAS thereby inhibiting its DNA binding ability and impairing its antiviral innate immunity. Negatively regulates IL7-mediated T-cell homeostasis by mediating 'Lys-27'-linked polyubiquitination of IL7R, leading to its lysosomal degradation. In terms of biological role, (Microbial infection) Mediates 'Lys-63'-linked polyubiquitination of hepatitis C virus/HCV protein NS2 which allows its binding to HGS, an ESCRT-0 complex component, and this interaction is essential for HCV envelopment. This Homo sapiens (Human) protein is E3 ubiquitin-protein ligase MARCHF8.